We begin with the raw amino-acid sequence, 356 residues long: Leucoanthocyanidin dioxygenase (356 aa).

Tyr-142 and Lys-213 together coordinate substrate. In terms of domain architecture, Fe2OG dioxygenase spans 208–307; it reads LLLQMKINYY…RISWAVFCEP (100 aa). 215–217 contributes to the 2-oxoglutarate binding site; that stretch reads NYY. His-232 is a Fe cation binding site. Position 233 (Thr-233) interacts with substrate. 2 residues coordinate Fe cation: Asp-234 and His-288. 298-300 provides a ligand contact to 2-oxoglutarate; that stretch reads RIS. Residues Glu-306 and Lys-341 each contribute to the substrate site.

This sequence belongs to the iron/ascorbate-dependent oxidoreductase family. L-ascorbate serves as cofactor. Requires Fe(2+) as cofactor. As to expression, expressed in young seedlings (at protein level).

The catalysed reaction is a (2R,3S,4S)-leucoanthocyanidin + 2-oxoglutarate + O2 = a 4-H-anthocyanidin with a 3-hydroxy group + succinate + CO2 + 2 H2O. It carries out the reaction (2R,3S,4S)-3,4-leucopelargonidin + 2-oxoglutarate + O2 = (4S)-2,3-dehydroleucopelargonidin + succinate + CO2 + H2O + H(+). It catalyses the reaction (2R,3S,4S)-leucocyanidin + 2-oxoglutarate + O2 = (4S)-2,3-dehydroleucocyanidin + succinate + CO2 + H2O + H(+). Its pathway is pigment biosynthesis; anthocyanin biosynthesis. Its function is as follows. Involved in anthocyanin and protoanthocyanidin biosynthesis by catalyzing the oxidation of leucoanthocyanidins into anthocyanidins. Possesses low flavonol synthase activity in vitro towards dihydrokaempferol and dihydroquercetin producing kaempferol and quercitin, respectively. This chain is Leucoanthocyanidin dioxygenase (LDOX), found in Arabidopsis thaliana (Mouse-ear cress).